A 377-amino-acid polypeptide reads, in one-letter code: Membrane protein MLC1 (377 aa).

The segment covering 1–23 (MTQEPFREELAYDRMPTLERGRQ) has biased composition (basic and acidic residues). Residues 1–36 (MTQEPFREELAYDRMPTLERGRQDPASYAPDAKPSD) are disordered. 4 helical membrane passes run 52 to 72 (WVFSVLMGSCLLVTSGFSLYL), 82 to 100 (YLRCAAGSCIPSAIVSFTV), 111 to 131 (FQILFVSTFAVTTTCLIWFGC), and 144 to 164 (FNLILLLLLELLMAATVIIAA). Phosphoserine is present on residues S177 and S179. Helical transmembrane passes span 199–219 (SVVEVIAGISAVLGGIIALNV), 230–250 (VTFFWILVACFPSAIASHVAA), 257–277 (LVEVLIAISSLTSPLLFTASG), and 304–324 (LLLLLLLVLLLQAGLNTGTAI).

As to quaternary structure, interacts with ATP1B1. Part of a complex containing ATP1B1, TRPV4, AQP4 and HEPACAM. Expressed in the brain, with highest levels found in the amygdala, nucleus caudatus, thalamus and hippocampus.

It localises to the membrane. Its subcellular location is the cell membrane. It is found in the cytoplasm. The protein localises to the perinuclear region. The protein resides in the endoplasmic reticulum. Transmembrane protein mainly expressed in brain astrocytes that may play a role in transport across the blood-brain and brain-cerebrospinal fluid barriers. Regulates the response of astrocytes to hypo-osmosis by promoting calcium influx. May function as regulatory protein of membrane protein complexes such as ion channels. The protein is Membrane protein MLC1 of Homo sapiens (Human).